Consider the following 118-residue polypeptide: D-dopachrome decarboxylase-B (118 aa).

At Pro-2 the chain carries N-acetylproline.

This sequence belongs to the MIF family. In terms of assembly, homotrimer.

The protein localises to the cytoplasm. It catalyses the reaction D-dopachrome + H(+) = 5,6-dihydroxyindole + CO2. Functionally, tautomerization of D-dopachrome with decarboxylation to give 5,6-dihydroxyindole (DHI). The protein is D-dopachrome decarboxylase-B (ddt-b) of Xenopus laevis (African clawed frog).